Reading from the N-terminus, the 421-residue chain is U-box domain-containing protein 26 (421 aa).

Positions 13-87 constitute a U-box domain; the sequence is QIPYHFRCPI…QEWCVANRSN (75 aa).

It catalyses the reaction S-ubiquitinyl-[E2 ubiquitin-conjugating enzyme]-L-cysteine + [acceptor protein]-L-lysine = [E2 ubiquitin-conjugating enzyme]-L-cysteine + N(6)-ubiquitinyl-[acceptor protein]-L-lysine.. It participates in protein modification; protein ubiquitination. Its function is as follows. Functions as an E3 ubiquitin ligase. The protein is U-box domain-containing protein 26 (PUB26) of Arabidopsis thaliana (Mouse-ear cress).